The sequence spans 247 residues: Peroxisomal membrane protein 11A (247 aa).

Over 1–83 (MDAFIRFTNQ…SVRATDLVPR (83 aa)) the chain is Cytoplasmic. The helical transmembrane segment at 84 to 105 (ICLTLASLNRVIYFICDTVLFV) threads the bilayer. Topologically, residues 106–219 (RSTGLASGVN…DQLGIYKSNP (114 aa)) are lumenal. Residues 220–239 (GIIGLGGLVSSVAGIITVAY) form a helical membrane-spanning segment. The interval 220 to 239 (GIIGLGGLVSSVAGIITVAY) is required for homodimerization, interaction with PEX11G, and peroxisomal localization. At 240 to 247 (PQMKLKTQ) the chain is on the cytoplasmic side.

This sequence belongs to the peroxin-11 family. Homodimer. Heterodimer with PEX11G. Probably interacts with COPB2 and COPA. Interacts with PEX19. Interacts with FIS1.

Its subcellular location is the peroxisome membrane. Its function is as follows. May be involved in peroxisomal proliferation and may regulate peroxisomes division. May mediate binding of coatomer proteins to the peroxisomal membrane. Promotes membrane protrusion and elongation on the peroxisomal surface. The chain is Peroxisomal membrane protein 11A (PEX11A) from Bos taurus (Bovine).